Reading from the N-terminus, the 341-residue chain is ATPase GET3 (341 aa).

34 to 41 contributes to the ATP binding site; sequence KGGVGKTT. Residue aspartate 63 is part of the active site. The ATP site is built by glutamate 245 and asparagine 272. Zn(2+) is bound by residues cysteine 283 and cysteine 286.

It belongs to the arsA ATPase family. Homodimer.

It is found in the cytoplasm. It localises to the endoplasmic reticulum. ATPase required for the post-translational delivery of tail-anchored (TA) proteins to the endoplasmic reticulum. Recognizes and selectively binds the transmembrane domain of TA proteins in the cytosol. This complex then targets to the endoplasmic reticulum by membrane-bound receptors, where the tail-anchored protein is released for insertion. This process is regulated by ATP binding and hydrolysis. ATP binding drives the homodimer towards the closed dimer state, facilitating recognition of newly synthesized TA membrane proteins. ATP hydrolysis is required for insertion. Subsequently, the homodimer reverts towards the open dimer state, lowering its affinity for the membrane-bound receptor, and returning it to the cytosol to initiate a new round of targeting. This chain is ATPase GET3, found in Paracoccidioides brasiliensis (strain Pb18).